Here is a 121-residue protein sequence, read N- to C-terminus: Large ribosomal subunit protein uL22 (121 aa).

The protein belongs to the universal ribosomal protein uL22 family. As to quaternary structure, part of the 50S ribosomal subunit.

This protein binds specifically to 23S rRNA; its binding is stimulated by other ribosomal proteins, e.g. L4, L17, and L20. It is important during the early stages of 50S assembly. It makes multiple contacts with different domains of the 23S rRNA in the assembled 50S subunit and ribosome. Functionally, the globular domain of the protein is located near the polypeptide exit tunnel on the outside of the subunit, while an extended beta-hairpin is found that lines the wall of the exit tunnel in the center of the 70S ribosome. In Rickettsia massiliae (strain Mtu5), this protein is Large ribosomal subunit protein uL22.